Here is a 283-residue protein sequence, read N- to C-terminus: Bifunctional protein FolD (283 aa).

Residues 165–167 and Ser-190 each bind NADP(+); that span reads GRS.

This sequence belongs to the tetrahydrofolate dehydrogenase/cyclohydrolase family. As to quaternary structure, homodimer.

It carries out the reaction (6R)-5,10-methylene-5,6,7,8-tetrahydrofolate + NADP(+) = (6R)-5,10-methenyltetrahydrofolate + NADPH. It catalyses the reaction (6R)-5,10-methenyltetrahydrofolate + H2O = (6R)-10-formyltetrahydrofolate + H(+). It participates in one-carbon metabolism; tetrahydrofolate interconversion. Its function is as follows. Catalyzes the oxidation of 5,10-methylenetetrahydrofolate to 5,10-methenyltetrahydrofolate and then the hydrolysis of 5,10-methenyltetrahydrofolate to 10-formyltetrahydrofolate. This Paracidovorax citrulli (strain AAC00-1) (Acidovorax citrulli) protein is Bifunctional protein FolD.